Consider the following 396-residue polypeptide: Ribosomal RNA large subunit methyltransferase I (396 aa).

Residues 2–79 form the PUA domain; sequence AIRIKLKPGR…REEEIDREFF (78 aa).

It belongs to the methyltransferase superfamily. RlmI family.

Its subcellular location is the cytoplasm. It carries out the reaction cytidine(1962) in 23S rRNA + S-adenosyl-L-methionine = 5-methylcytidine(1962) in 23S rRNA + S-adenosyl-L-homocysteine + H(+). Specifically methylates the cytosine at position 1962 (m5C1962) of 23S rRNA. This is Ribosomal RNA large subunit methyltransferase I from Shewanella baltica (strain OS155 / ATCC BAA-1091).